The following is a 597-amino-acid chain: Apurinic-apyrimidinic endonuclease 1 (597 aa).

Polar residues predominate over residues Y232 to T246. The segment at Y232 to D296 is disordered. The span at N265–K274 shows a compositional bias: low complexity. Zn(2+)-binding residues include H380, H420, E456, D490, H493, H527, D540, H542, and E572. H493 serves as a coordination point for Mn(2+). Positions 540 and 542 each coordinate Mn(2+).

Belongs to the AP endonuclease 2 family. Requires Zn(2+) as cofactor. The cofactor is Mn(2+). May be proteolytically cleaved into a 59 kDa form.

The protein resides in the mitochondrion. Its activity is regulated as follows. Apurinic/apyrimidinic (AP) endonuclease activity is enhanced with increasing concentrations of Mn(2+), while Zn(2+) initially enhances activity but subsequently inhibits activity in a concentration-dependent manner. Co(2+) inhibits apurinic/apyrimidinic (AP) endonuclease activity at concentrations greater than 2.5 mM. In terms of biological role, plays a role in mitochondrial DNA base excision repair (BER) pathway induced by oxidative stress. Has apurinic/apyrimidinic (AP) endonuclease activity towards double-stranded DNA (dsDNA) with a preference for C as opposite base. Has 3'-phosphatase activity; removes 3'-phosphate from blunt-end, recessed, and gapped DNA templates and thus, removes 3'-blocks for DNA polymerase activity during BER. Lacks 3'-5' exonuclease activity and does not cleave damaged bases by nucleotide incision repair (NIR). This chain is Apurinic-apyrimidinic endonuclease 1, found in Plasmodium falciparum (isolate 3D7).